The primary structure comprises 367 residues: Glutamate 5-kinase (367 aa).

K10 provides a ligand contact to ATP. Substrate is bound by residues S50, D137, and N149. ATP-binding positions include 169 to 170 (TD) and 211 to 217 (TGGMATK). The 79-residue stretch at 275-353 (AGVIIVDNGA…QEISQILGYE (79 aa)) folds into the PUA domain.

The protein belongs to the glutamate 5-kinase family.

It localises to the cytoplasm. It carries out the reaction L-glutamate + ATP = L-glutamyl 5-phosphate + ADP. It functions in the pathway amino-acid biosynthesis; L-proline biosynthesis; L-glutamate 5-semialdehyde from L-glutamate: step 1/2. Catalyzes the transfer of a phosphate group to glutamate to form L-glutamate 5-phosphate. The chain is Glutamate 5-kinase from Proteus mirabilis (strain HI4320).